The primary structure comprises 367 residues: tRNA (cytosine(34)-C(5))-methyltransferase, mitochondrial (367 aa).

Residues cysteine 170 to lysine 176, glutamate 193, aspartate 224, and aspartate 242 contribute to the S-adenosyl-L-methionine site. Residue cysteine 296 is the Nucleophile of the active site.

It belongs to the class I-like SAM-binding methyltransferase superfamily. RsmB/NOP family.

It is found in the mitochondrion matrix. The enzyme catalyses cytidine(34) in mitochondrial tRNA + S-adenosyl-L-methionine = 5-methylcytidine(34) in mitochondrial tRNA + S-adenosyl-L-homocysteine + H(+). In terms of biological role, mitochondrial tRNA methyltransferase that mediates methylation of cytosine to 5-methylcytosine (m5C) at position 34 of mt-tRNA(Met). mt-tRNA(Met) methylation at cytosine(34) takes place at the wobble position of the anticodon and initiates the formation of 5-formylcytosine (f(5)c) at this position. mt-tRNA(Met) containing the f(5)c modification at the wobble position enables recognition of the AUA codon in addition to the AUG codon, expanding codon recognition in mitochondrial translation. In Danio rerio (Zebrafish), this protein is tRNA (cytosine(34)-C(5))-methyltransferase, mitochondrial.